The chain runs to 144 residues: Large ribosomal subunit protein uL15 (144 aa).

Residues 1–53 form a disordered region; it reads MYLNTLAPAEGAKHSAKRLGRGIGSGLGKTGGRGHKGQKSRTGGGVRRGFEGG. The segment covering 21–31 has biased composition (gly residues); that stretch reads RGIGSGLGKTG.

It belongs to the universal ribosomal protein uL15 family. As to quaternary structure, part of the 50S ribosomal subunit.

Functionally, binds to the 23S rRNA. The chain is Large ribosomal subunit protein uL15 from Mannheimia succiniciproducens (strain KCTC 0769BP / MBEL55E).